Here is a 723-residue protein sequence, read N- to C-terminus: Methionine--tRNA ligase (723 aa).

The 'HIGH' region motif lies at 11-21; sequence PYANGPIHAGH. Positions 143, 146, 156, and 159 each coordinate Zn(2+). The 'KMSKS' region motif lies at 344–348; it reads KFSTS. Thr-347 contacts ATP. The 101-residue stretch at 623-723 folds into the tRNA-binding domain; that stretch reads DFAKLDLRVG…KEVKLGAKVR (101 aa).

This sequence belongs to the class-I aminoacyl-tRNA synthetase family. MetG type 1 subfamily. Homodimer. Zn(2+) serves as cofactor.

Its subcellular location is the cytoplasm. It carries out the reaction tRNA(Met) + L-methionine + ATP = L-methionyl-tRNA(Met) + AMP + diphosphate. Functionally, is required not only for elongation of protein synthesis but also for the initiation of all mRNA translation through initiator tRNA(fMet) aminoacylation. The polypeptide is Methionine--tRNA ligase (Pyrococcus horikoshii (strain ATCC 700860 / DSM 12428 / JCM 9974 / NBRC 100139 / OT-3)).